Here is a 185-residue protein sequence, read N- to C-terminus: Elongation factor P (185 aa).

Belongs to the elongation factor P family.

The protein localises to the cytoplasm. The protein operates within protein biosynthesis; polypeptide chain elongation. In terms of biological role, involved in peptide bond synthesis. Stimulates efficient translation and peptide-bond synthesis on native or reconstituted 70S ribosomes in vitro. Probably functions indirectly by altering the affinity of the ribosome for aminoacyl-tRNA, thus increasing their reactivity as acceptors for peptidyl transferase. The sequence is that of Elongation factor P from Trichodesmium erythraeum (strain IMS101).